The sequence spans 344 residues: S-methyl-5'-thioadenosine phosphorylase (344 aa).

Phosphate is bound by residues Thr-45, 88-89 (RH), and 121-122 (SA). Met-238 contributes to the substrate binding site. Ser-239 contributes to the phosphate binding site. 262–264 (DYD) is a substrate binding site.

This sequence belongs to the PNP/MTAP phosphorylase family. MTAP subfamily. In terms of assembly, homotrimer.

It is found in the cytoplasm. The protein localises to the nucleus. The enzyme catalyses S-methyl-5'-thioadenosine + phosphate = 5-(methylsulfanyl)-alpha-D-ribose 1-phosphate + adenine. Its pathway is amino-acid biosynthesis; L-methionine biosynthesis via salvage pathway; S-methyl-5-thio-alpha-D-ribose 1-phosphate from S-methyl-5'-thioadenosine (phosphorylase route): step 1/1. Its function is as follows. Catalyzes the reversible phosphorylation of S-methyl-5'-thioadenosine (MTA) to adenine and 5-methylthioribose-1-phosphate. Involved in the breakdown of MTA, a major by-product of polyamine biosynthesis. Responsible for the first step in the methionine salvage pathway after MTA has been generated from S-adenosylmethionine. Has broad substrate specificity with 6-aminopurine nucleosides as preferred substrates. The chain is S-methyl-5'-thioadenosine phosphorylase from Candida albicans (strain WO-1) (Yeast).